The chain runs to 945 residues: Leucine--tRNA ligase 1 (945 aa).

A 'HIGH' region motif is present at residues 42-52 (PYTNSPLHIGH). Residues 625-629 (KMSKS) carry the 'KMSKS' region motif. ATP is bound at residue K628.

This sequence belongs to the class-I aminoacyl-tRNA synthetase family.

Its subcellular location is the cytoplasm. It carries out the reaction tRNA(Leu) + L-leucine + ATP = L-leucyl-tRNA(Leu) + AMP + diphosphate. In Sulfurisphaera tokodaii (strain DSM 16993 / JCM 10545 / NBRC 100140 / 7) (Sulfolobus tokodaii), this protein is Leucine--tRNA ligase 1.